The sequence spans 224 residues: UPF0441 protein ECA0329 (224 aa).

The tract at residues 180–224 (TALAPKPATTSTITRGGFGETVAKQNSMQRSSASSNSSSSRSMGG) is disordered. The segment covering 204–224 (QNSMQRSSASSNSSSSRSMGG) has biased composition (low complexity).

This sequence belongs to the UPF0441 family.

The polypeptide is UPF0441 protein ECA0329 (Pectobacterium atrosepticum (strain SCRI 1043 / ATCC BAA-672) (Erwinia carotovora subsp. atroseptica)).